The sequence spans 123 residues: uncharacterized protein (123 aa).

This is an uncharacterized protein from Saccharomyces cerevisiae (strain ATCC 204508 / S288c) (Baker's yeast).